Consider the following 80-residue polypeptide: Conotoxin ArMKLT2-0321 (80 aa).

The signal sequence occupies residues 1–21; the sequence is MKLTCVLIIAMLFLIVCQLNT. Positions 22 to 48 are excised as a propeptide; that stretch reads ADDSTDKQEYRAVKLRDAMRNFKGSKR. Intrachain disulfides connect cysteine 50-cysteine 63, cysteine 57-cysteine 68, and cysteine 62-cysteine 77.

The protein belongs to the conotoxin O1 superfamily. In terms of tissue distribution, expressed by the venom duct.

It localises to the secreted. The polypeptide is Conotoxin ArMKLT2-0321 (Conus arenatus (Sand-dusted cone)).